Consider the following 113-residue polypeptide: Beta-microseminoprotein (113 aa).

The signal sequence occupies residues 1–20; that stretch reads MKARLGSLLVLATLVTASNA. Intrachain disulfides connect Cys-22–Cys-69, Cys-38–Cys-61, Cys-56–Cys-92, Cys-59–Cys-68, and Cys-83–Cys-106.

This sequence belongs to the beta-microseminoprotein family. As to quaternary structure, homodimer; Interacts with PI16.

The protein resides in the secreted. The polypeptide is Beta-microseminoprotein (Msmb) (Rattus norvegicus (Rat)).